Reading from the N-terminus, the 257-residue chain is 8-demethyl-8-aminoriboflavin-5'-phosphate synthase (257 aa).

FMN-binding positions include 11–13 (TLR), 19–21 (SQT), 91–94 (ITLN), 132–136 (CGNED), and Tyr-240.

It belongs to the SsuE family. As to quaternary structure, homotetramer.

The enzyme catalyses FMN + L-glutamate + 3 A + O2 + H2O = 8-amino-8-demethylriboflavin 5'-phosphate + 2-oxoglutarate + 3 AH2 + CO2 + H(+). Its pathway is antibiotic biosynthesis. Its function is as follows. Involved in the biosynthesis of the riboflavin analog antibiotic roseoflavin (3,8-dimethylamino-riboflavin). Catalyzes the site-specific substitution of the C-8 methyl group of riboflavin-5'-phosphate (FMN) by an amino group to yield 8-amino-8-demethylriboflavin 5'-phosphate, via a combined oxidation, decarboxylation and transamination reaction. The catalysis is initiated by an oxidation step in which the C-8 methyl group on the dimethylbenzene ring of FMN is converted to a formyl group to yield the 8-demethyl-8-formylriboflavin-5'-phosphate (OHC-RP) intermediate. In the presence of thiamine, the formyl group is oxidized into a carboxyl group to yield the 8-demethyl-8-carboxyriboflavin-5'-phosphate (HO2C-RP) intermediate. Finally, in the presence of L-glutamate as an amino donor, decarboxylation and aminotransfer occur, resulting in production of 8-demethyl-8-aminoriboflavin-5'-phosphate. Addition of NAD (but not NADP) to the reaction increases the yield 1.7-fold. The reaction also proceeds without the addition of any electron acceptor, and it is possible that molecular oxygen serves this role. The chain is 8-demethyl-8-aminoriboflavin-5'-phosphate synthase from Streptomyces davaonensis (strain DSM 101723 / JCM 4913 / KCC S-0913 / 768).